We begin with the raw amino-acid sequence, 470 residues long: Sugar transporter ESL1 (470 aa).

The Essential for the localization to the vacuole membrane signature appears at 10 to 16 (LEAGLLL). The next 12 helical transmembrane spans lie at 28-48 (ITAVVLFSTFVSVCGSFCFGC), 68-88 (VAQYSMFGSIMTFGGMIGAIF), 99-119 (KGTMWFAQIFCIFGWVAVALA), 130-150 (LSTGFAVGLLSYVIPVYIAEI), 157-177 (GAFVFANQLMQSCGLSLFYVI), 186-206 (LALIGLIPCALQVVTLFFIPE), 268-288 (VVIGVGLMLLQQLSGSSGLMY), 303-323 (IGSMILAVIMIPKALLGLILV), 332-352 (LLASTGGMCFFSLLLSFSFCF), 368-388 (IGVVGFISSFAVGMGGLPWII), 404-424 (LVTLANWSFGWIVAFAYNFML), and 430-450 (GTFLIFFTICGAGIVFIYAMV).

It belongs to the major facilitator superfamily. Sugar transporter (TC 2.A.1.1) family. In terms of tissue distribution, expressed in both shoots and roots. In roots, strongly expressed in pericycle and xylem parenchyma cells, and to a lesser extent in the root endodermis. In flowers, expressed in sepals.

The protein resides in the vacuole membrane. The protein localises to the vesicle. Its function is as follows. Sugar transporter. Transports monosaccharides across the vacuolar membrane independently from a proton gradient. May function coordinately with the vacuolar invertase to regulate osmotic pressure by affecting the accumulation of sugar in the cells under abiotic stress conditions. The polypeptide is Sugar transporter ESL1 (Arabidopsis thaliana (Mouse-ear cress)).